A 635-amino-acid chain; its full sequence is MSPFGSKKNRSLSVRVSTFDSELEFKLEPRASGQDLFDLVCRTIGLRESWYFGLQYVDTRSNVSWLKMEKRVRDQRVELHASNNVYVFSFYAKFFPENVSEELIQEITQHLFFLQVKQSILSMDIYCRPEASVLLASYAVHVQYGPYDYETYKDGMLAGGELLPKGVTDQYQMTPEMWEERIKTWYMDHEPMTRDEVEMEYLKIAQDLDMYGVNYFPITNKNKTKLWLGVTSVGLNIYDERDKLTPKTTFQWNEIRHVSFDDKKFTIRLVDAKVSNFIFYSQDLHINKMILDLCKGNHDLYMRRRKPDTMEIQQMKAQAKEEKQRRQIERKKFIREKKLREKAEHERYELEKSMEHLQNEMRMANDALRRSEETKELYFEKSRVNEEQMQLTECKANHFKTEMDRLRERQMKIEREKHDLEKKIRDADFYVHQLTVENDKREAETEKLRKELICAKMAEREATARLLEFLNSGRKSSTDSLLTASSVSHAANTASSMAAISTPSLITSSSTNDLETAGGAELTTHSSHYLVQGDNSSGISDDFEPKEFILTDNEMEQITNEMERNHLDYLRNSKQVQSQLQTLRSEIAPHKIEENQSNLDILSEAQIKAGENKYSTLKKLKSGSTKARVAFFEEL.

Positions 12-305 (LSVRVSTFDS…GNHDLYMRRR (294 aa)) constitute an FERM domain.

As to quaternary structure, interacts with Moe and arm at the adherens junction. Forms a complex with Kibra and Ex. Interacts (via FERM domain) with Sav (via FBM motif). Interacts with Schip1. Expressed predominantly in the germline. Expressed in the developing oocyte from stage 6 to the end of oogenesis and in the apical ends of follical cells from stage 10. Ubiquitous expression throughout embryogenesis with enhanced expression in mesoderm of early embryos and midgut of late embryos. In embryonic CNS, expression is seen in neuropil and developing brain and is enhanced in neuronal cell bodies. In embryonic PNS, expression is seen within the cell body. In third instar larvae, expression is uniform in the eye imaginal disk and is enhanced at the morphogenetic furrow. In pupal eyes, expression is seen in the cytoplasm of secondary and tertiary pigment cells, bristle precursor cells and rhabdomeres.

Its subcellular location is the cell junction. The protein localises to the adherens junction. It localises to the cell membrane. It is found in the cytoplasm. The protein resides in the cytoskeleton. Its subcellular location is the apical cell membrane. The protein localises to the cell projection. It localises to the rhabdomere. In terms of biological role, regulator of the Hippo/SWH (Sav/Wts/Hpo) signaling pathway, a signaling pathway that plays a pivotal role in organ size control and tumor suppression by restricting proliferation and promoting apoptosis. The core of this pathway is composed of a kinase cascade wherein Hippo (Hpo), in complex with its regulatory protein Salvador (Sav), phosphorylates and activates Warts (Wts) in complex with its regulatory protein Mats, which in turn phosphorylates and inactivates the Yorkie (Yki) oncoprotein. Mer acts synergistically along with Ex and Kibra to regulate the Hippo signaling pathway. The protein is Moesin/ezrin/radixin homolog 2 (Mer) of Drosophila melanogaster (Fruit fly).